Reading from the N-terminus, the 372-residue chain is Caytaxin (372 aa).

Residues 1-58 (MGTTEATLRMENVDVRDEWQDEDLPRPLPEDTGVERLGGAVEDSSSPPSTLNLSGAHR) are disordered. Over residues 11–29 (ENVDVRDEWQDEDLPRPLP) the composition is skewed to basic and acidic residues. Positions 43–53 (DSSSPPSTLNL) are enriched in polar residues. Ser54 carries the post-translational modification Phosphoserine. The segment at 115 to 120 (ELEWED) is required for interaction with KLC1. Positions 171-328 (IRPYMKVVTH…CVLQYEEQRL (158 aa)) constitute a CRAL-TRIO domain. Residues 190–372 (AIIVFAACFL…ATEDQETSMS (183 aa)) form a mediates interaction with GLS region. The tract at residues 329-372 (RAKRESTRPPQPEFLLPRSEEKPETVEEEDRAAEATEDQETSMS) is disordered. A compositionally biased stretch (acidic residues) spans 354–372 (VEEEDRAAEATEDQETSMS).

As to quaternary structure, interacts with KLC1; may link mitochondria to KLC1 and regulate mitochondria localization into neuron projections. Interacts with GLS; the interaction is direct and may control GLS localization, negatively regulating its activity. Interacts with PIN1 (via WW domain); upon NGF stimulation. The interaction with PIN1 and GLS is competitive. In terms of processing, cleaved by CASP3 and CASP7. The potential C-terminal product released by CASP3 cleavage may inhibit the ERK signaling pathway through MAP2K2. Post-translationally, may be ubiquitinated by STUB1. Neuronal tissues specific. Strongly expressed in brain. Expressed in virtually all parts of the adult brain, including cortex, cerebellum and olfactory bulbs. Enriched in hippocampus, cerebellar cortex, deep cerebellar nuclei, and pontine nuclei (at protein level).

It localises to the cell projection. The protein resides in the axon. It is found in the dendrite. Its subcellular location is the presynapse. The protein localises to the mitochondrion. It localises to the growth cone. The protein resides in the cytoplasm. In terms of biological role, functions in the development of neural tissues, particularly the postnatal maturation of the cerebellar cortex. May play a role in neurotransmission through regulation of glutaminase/GLS, an enzyme responsible for the production in neurons of the glutamate neurotransmitter. Alternatively, may regulate the localization of mitochondria within axons and dendrites. The polypeptide is Caytaxin (Atcay) (Mus musculus (Mouse)).